A 124-amino-acid chain; its full sequence is S-adenosylmethionine decarboxylase proenzyme (124 aa).

Serine 63 (schiff-base intermediate with substrate; via pyruvic acid) is an active-site residue. Pyruvic acid (Ser); by autocatalysis is present on serine 63. Histidine 68 acts as the Proton acceptor; for processing activity in catalysis. The Proton donor; for catalytic activity role is filled by cysteine 83.

Belongs to the prokaryotic AdoMetDC family. Type 1 subfamily. As to quaternary structure, heterotetramer of two alpha and two beta chains arranged as a dimer of alpha/beta heterodimers. Pyruvate is required as a cofactor. Is synthesized initially as an inactive proenzyme. Formation of the active enzyme involves a self-maturation process in which the active site pyruvoyl group is generated from an internal serine residue via an autocatalytic post-translational modification. Two non-identical subunits are generated from the proenzyme in this reaction, and the pyruvate is formed at the N-terminus of the alpha chain, which is derived from the carboxyl end of the proenzyme. The post-translation cleavage follows an unusual pathway, termed non-hydrolytic serinolysis, in which the side chain hydroxyl group of the serine supplies its oxygen atom to form the C-terminus of the beta chain, while the remainder of the serine residue undergoes an oxidative deamination to produce ammonia and the pyruvoyl group blocking the N-terminus of the alpha chain.

It carries out the reaction S-adenosyl-L-methionine + H(+) = S-adenosyl 3-(methylsulfanyl)propylamine + CO2. The protein operates within amine and polyamine biosynthesis; S-adenosylmethioninamine biosynthesis; S-adenosylmethioninamine from S-adenosyl-L-methionine: step 1/1. Its function is as follows. Catalyzes the decarboxylation of S-adenosylmethionine to S-adenosylmethioninamine (dcAdoMet), the propylamine donor required for the synthesis of the polyamines spermine and spermidine from the diamine putrescine. The chain is S-adenosylmethionine decarboxylase proenzyme from Thermoanaerobacter pseudethanolicus (strain ATCC 33223 / 39E) (Clostridium thermohydrosulfuricum).